The sequence spans 362 residues: MRKRISAIINKLNISIMMMIVVLMIGCGQQAVEAGKDGAAAATGGRSLSEVLMEVGKSAENAFYSFMALVPDTLGLRVTKDTKKNEVGGYFNSLGGKLGKASDELEEVAKKSEVEGAKDGPIAVAIRAAVDTAKTTLSTLKEHLESLKGIGDDDKVGEATSNQNGVAASTDELKGAFKALKGIVDTAGKEGVAKPKAGDTAVKIGNADNKDGAKVLAAAANAGRAVGDKAAAIVSAVSGEEMLASIVASQEGDADAALAADATAQTSALKFARGGGNAGQLAKEAAKAAAVAGGIALRSLVKGGKLAANNNDDDKVVQSAGVTAVNKLLVAVEGIIKKTVKNVLEKAKGEIDKARAPKATGQ.

A signal peptide spans 1–26; it reads MRKRISAIINKLNISIMMMIVVLMIG. Residue C27 is the site of N-palmitoyl cysteine attachment. C27 carries the S-diacylglycerol cysteine lipid modification.

It belongs to the variable large protein (Vlp) family. Alpha subfamily.

It localises to the cell outer membrane. Its function is as follows. The Vlp and Vsp proteins are antigenically distinct proteins, only one vlp or vsp gene is transcriptionally active at any one time. Switching between these genes is a mechanism of host immune response evasion. In Borrelia hermsii, this protein is Variable large protein 25.